A 280-amino-acid polypeptide reads, in one-letter code: Ribose-phosphate pyrophosphokinase (280 aa).

ATP contacts are provided by residues 32-34 (DGE) and 89-90 (RQ). The Mg(2+) site is built by His-122 and Asp-160. Residue Lys-183 is part of the active site. D-ribose 5-phosphate contacts are provided by residues Arg-185, Asp-209, and 213 to 217 (STGGT).

Belongs to the ribose-phosphate pyrophosphokinase family. Class III (archaeal) subfamily. The cofactor is Mg(2+).

The protein resides in the cytoplasm. It carries out the reaction D-ribose 5-phosphate + ATP = 5-phospho-alpha-D-ribose 1-diphosphate + AMP + H(+). It functions in the pathway metabolic intermediate biosynthesis; 5-phospho-alpha-D-ribose 1-diphosphate biosynthesis; 5-phospho-alpha-D-ribose 1-diphosphate from D-ribose 5-phosphate (route I): step 1/1. With respect to regulation, activated by Co(2+) and Ni(2+) ions, however Mg(2+) ion shows almost no significant effect on the activity. Equally inhibited by ADP, CTP and GTP, while dTTP and UTP are less inhibitory. Its function is as follows. Involved in the biosynthesis of the central metabolite phospho-alpha-D-ribosyl-1-pyrophosphate (PRPP) via the transfer of pyrophosphoryl group from ATP to 1-hydroxyl of ribose-5-phosphate (Rib-5-P). It can also use CTP and GTP as substrates in addition to ATP. The polypeptide is Ribose-phosphate pyrophosphokinase (Thermococcus kodakarensis (strain ATCC BAA-918 / JCM 12380 / KOD1) (Pyrococcus kodakaraensis (strain KOD1))).